Consider the following 243-residue polypeptide: Mesoderm posterior protein 1 (243 aa).

The segment at Met-1–Lys-86 is disordered. Polar residues predominate over residues Asp-27–Trp-36. Residues Gly-76–Leu-130 enclose the bHLH domain. Positions Cys-153 to Pro-157 match the CPLCP motif. The segment at Ala-204–Leu-228 is disordered.

No expression was detected in adult tissues except the testis. Expression in the testis was regulated developmentally; expressed 2 weeks after birth, and increases, reaching the full expression level in mature testes.

Its subcellular location is the nucleus. Transcription factor. Plays a role in the epithelialization of somitic mesoderm and in the development of cardiac mesoderm. Defines the rostrocaudal patterning of the somites by participating in distinct Notch pathways. In Mus musculus (Mouse), this protein is Mesoderm posterior protein 1 (Mesp1).